Here is a 443-residue protein sequence, read N- to C-terminus: tRNA-2-methylthio-N(6)-dimethylallyladenosine synthase (443 aa).

Residues 3-120 enclose the MTTase N-terminal domain; the sequence is SKLYIKTFGC…LPELIDARRR (118 aa). [4Fe-4S] cluster is bound by residues cysteine 12, cysteine 49, cysteine 83, cysteine 157, cysteine 161, and cysteine 164. The region spanning 143-377 is the Radical SAM core domain; it reads RTTGATAFVS…KIQRNAQMIS (235 aa). The TRAM domain maps to 378–441; that stretch reads QSMVDTIQRV…SHTLRGEISD (64 aa).

It belongs to the methylthiotransferase family. MiaB subfamily. As to quaternary structure, monomer. Requires [4Fe-4S] cluster as cofactor.

It is found in the cytoplasm. The enzyme catalyses N(6)-dimethylallyladenosine(37) in tRNA + (sulfur carrier)-SH + AH2 + 2 S-adenosyl-L-methionine = 2-methylsulfanyl-N(6)-dimethylallyladenosine(37) in tRNA + (sulfur carrier)-H + 5'-deoxyadenosine + L-methionine + A + S-adenosyl-L-homocysteine + 2 H(+). In terms of biological role, catalyzes the methylthiolation of N6-(dimethylallyl)adenosine (i(6)A), leading to the formation of 2-methylthio-N6-(dimethylallyl)adenosine (ms(2)i(6)A) at position 37 in tRNAs that read codons beginning with uridine. The chain is tRNA-2-methylthio-N(6)-dimethylallyladenosine synthase from Nitrosomonas eutropha (strain DSM 101675 / C91 / Nm57).